The sequence spans 129 residues: Prefoldin subunit 6 (129 aa).

Coiled coils occupy residues 6–26 and 84–118; these read VRDLQRDLENKANDLGKIQKD and IEYISAELKRLDAILQDMEEKQNNKRETIMKLQQR.

It belongs to the prefoldin subunit beta family. In terms of assembly, heterohexamer of two PFD-alpha type and four PFD-beta type subunits forming prefoldin co-chaperone complex. Interacts with PFD2, PFD3, PFD4 and PFD5. Interacts with LSM8, a specific subunit of the LSM2-8 complex, which is a core component of the spliceosome. Binds to HSP90 to facilitate the formation of a larger complex made at least of HSP90, PFD6 and LSM8.

It localises to the cytoplasm. The protein localises to the nucleus. Its function is as follows. Binds specifically to cytosolic chaperonin (c-CPN) and transfers target proteins to it. Binds to nascent polypeptide chain and promotes folding in an environment in which there are many competing pathways for nonnative proteins. Together with other chaperonins, contribute to the regulation of gene expression by modulating the spliceosome function on pre-mRNA splicing post-transcriptionally by acting as a co-chaperone of Hsp90 to control levels of LSM8. Required for the biogenesis of tubulins and for subsequent microtubules (MTs) organization and dynamicity, but unable to associate with microtubules. Involved in the process leading to microtubules dissociation in response to gibberellic acid (GA) probably due to the DELLA proteins-mediated translocation of the prefoldin co-chaperone complex from the cytoplasm to the nucleus. Contributes to the GA-dependent regulation of PIN2 trafficking at the plasma membrane, thus influencing auxin flux. The chain is Prefoldin subunit 6 from Arabidopsis thaliana (Mouse-ear cress).